Reading from the N-terminus, the 158-residue chain is Cyclic pyranopterin monophosphate synthase (158 aa).

Substrate-binding positions include 76–78 and 114–115; these read MCH and ME. Residue Asp129 is part of the active site.

The protein belongs to the MoaC family. In terms of assembly, homohexamer; trimer of dimers.

The catalysed reaction is (8S)-3',8-cyclo-7,8-dihydroguanosine 5'-triphosphate = cyclic pyranopterin phosphate + diphosphate. The protein operates within cofactor biosynthesis; molybdopterin biosynthesis. Its function is as follows. Catalyzes the conversion of (8S)-3',8-cyclo-7,8-dihydroguanosine 5'-triphosphate to cyclic pyranopterin monophosphate (cPMP). This Clostridium perfringens (strain 13 / Type A) protein is Cyclic pyranopterin monophosphate synthase.